The sequence spans 205 residues: Probable transcription factor Ken (205 aa).

3 C2H2-type zinc fingers span residues 106–128 (YRCE…LRVH), 134–157 (FACR…CSVH), and 173–196 (YSCC…SGHH).

It localises to the nucleus. Functionally, probable transcription factor, which is required for terminalia development. This is Probable transcription factor Ken (ken) from Drosophila yakuba (Fruit fly).